The primary structure comprises 100 residues: MLSTRFVTLAILACLLVVLGLARGAGGDPGVKQRIDVAREEERRDFWHAACSGHGFPITTPSTAAILFYVSLLAVGVAVACQAYRAVLRIVTLEMLQHLH.

Residues 1–27 (MLSTRFVTLAILACLLVVLGLARGAGG) form the signal peptide. The Virion surface segment spans residues 28-63 (DPGVKQRIDVAREEERRDFWHAACSGHGFPITTPST). Residues 64 to 84 (AAILFYVSLLAVGVAVACQAY) form a helical membrane-spanning segment. Residues 85 to 100 (RAVLRIVTLEMLQHLH) lie on the Intravirion side of the membrane.

This sequence belongs to the herpesviridae glycoprotein N family. In terms of assembly, interacts (via N-terminus) with gM (via N-terminus). The gM-gN heterodimer forms the gCII complex.

The protein resides in the virion membrane. It is found in the host membrane. Its subcellular location is the host Golgi apparatus. It localises to the host trans-Golgi network. Functionally, envelope glycoprotein necessary for proper maturation of gM and modulation of its membrane fusion activity. Also plays a critical role in virion morphogenesis. The polypeptide is Envelope glycoprotein N (Equus caballus (Horse)).